Consider the following 239-residue polypeptide: Ribosomal RNA small subunit methyltransferase G (239 aa).

S-adenosyl-L-methionine is bound by residues glycine 77, phenylalanine 82, 128-129, and arginine 146; that span reads AE. The segment at 214–239 is disordered; it reads IDKKRQTPKKYPRKPGTPNKTPLLEK.

Belongs to the methyltransferase superfamily. RNA methyltransferase RsmG family.

It is found in the cytoplasm. In terms of biological role, specifically methylates the N7 position of guanine in position 535 of 16S rRNA. This is Ribosomal RNA small subunit methyltransferase G from Staphylococcus aureus (strain Mu3 / ATCC 700698).